Reading from the N-terminus, the 455-residue chain is MRLLVVGKLNGQLSVAVKMAMNAGAKVSHVETTEQATNALRAGQGADLLMVDYVLDIAGLIAANEAERMRVPVVACGVDADPMRAANAIKAGAKEFIPLPPDAELIAAVLAAVTDDEKPMVVRDPAMEQVIKLADQVAPSEASILITGESGSGKEVMARYVHGKSRRAKAPFISVNCAAIPENLLESELFGHEKGAFTGAMARRIGKFEEADGGTLLLDEISEMDVRLQAKLLRAIQEREIDRVGGSKPVKVNIRILATSNRDLAQAVKDGTFREDLLYRLNVVNLRLPPLRERPADVISLCEFFVKKYSAANGIEEKPISAEAKRRLIAHRWPGNVRELENAMHRAVLLSAGPEIEEFAIRLPDGQPMAPAPDVAVARGAQMAADAASRAFVGSTVAEVEQQLIIDTLEHCLGNRTHAANILGISIRTLRNKLKEYSDAGVQVPPPQGGVGAAA.

The Response regulatory domain occupies 2 to 114 (RLLVVGKLNG…LIAAVLAAVT (113 aa)). The 230-residue stretch at 120-349 (MVVRDPAMEQ…LENAMHRAVL (230 aa)) folds into the Sigma-54 factor interaction domain. ATP-binding positions include 148-155 (GESGSGKE) and 211-220 (ADGGTLLLDE). The H-T-H motif DNA-binding region spans 416-435 (RTHAANILGISIRTLRNKLK).

Its subcellular location is the cytoplasm. Functionally, activation of sigma-54-dependent flagellar gene promoters and strong negative autoregulatory effects on its own promoter. The synthesis and function of FlbD in C.crescentus is controlled by an internal cell-cycle clock. This Caulobacter vibrioides (strain ATCC 19089 / CIP 103742 / CB 15) (Caulobacter crescentus) protein is Transcriptional regulatory protein FlbD (flbD).